Here is a 352-residue protein sequence, read N- to C-terminus: Dolichol-phosphate mannosyltransferase (352 aa).

Over 1 to 229 the chain is Cytoplasmic; the sequence is MKVSVIIPTY…HIYRLMKWEG (229 aa). Residues proline 8, tyrosine 10, glutamate 12, valine 37, aspartate 39, aspartate 89, alanine 90, aspartate 91, glutamine 93, arginine 117, valine 156, lysine 178, arginine 202, and lysine 208 each contribute to the GDP-alpha-D-mannose site. 2 residues coordinate Mg(2+): aspartate 91 and glutamine 93. Mn(2+) contacts are provided by aspartate 91 and glutamine 93. The helical transmembrane segment at 230 to 256 threads the bilayer; the sequence is EIDRIVKFSIVGLSGILVNEGFLWLFV. Over 257 to 261 the chain is Extracellular; sequence NLGIP. A helical membrane pass occupies residues 262-286; sequence KEIAVIPAVELSILNNFFWNDIWTF. Residues 287–293 are Cytoplasmic-facing; the sequence is KDIRRGS. Residues 294-320 traverse the membrane as a helical segment; that stretch reads IFSRLLKFHIAALSGAVVNFIVYWILL. Residues 321 to 325 are Extracellular-facing; that stretch reads FLGIH. A helical membrane pass occupies residues 326–350; that stretch reads YLIANLVGIVLSFGVRYVINRHVTW. Residues 351 to 352 are Cytoplasmic-facing; sequence AT.

The protein belongs to the glycosyltransferase 2 family. It depends on Mg(2+) as a cofactor. Requires Mn(2+) as cofactor. Ca(2+) is required as a cofactor.

The protein localises to the cell membrane. The enzyme catalyses a di-trans,poly-cis-dolichyl phosphate + GDP-alpha-D-mannose = a di-trans,poly-cis-dolichyl beta-D-mannosyl phosphate + GDP. It functions in the pathway protein modification; protein glycosylation. Functionally, transfers mannose from GDP-mannose to dolichol monophosphate to form dolichol phosphate mannose (Dol-P-Man) which is the mannosyl donor in pathways leading to N-glycosylation, glycosyl phosphatidylinositol membrane anchoring, and O-mannosylation of proteins. The polypeptide is Dolichol-phosphate mannosyltransferase (Pyrococcus furiosus (strain ATCC 43587 / DSM 3638 / JCM 8422 / Vc1)).